We begin with the raw amino-acid sequence, 34 residues long: Dermaseptin-S2 (34 aa).

The protein belongs to the frog skin active peptide (FSAP) family. Dermaseptin subfamily. In terms of tissue distribution, expressed by the skin glands.

It is found in the secreted. Potent antimicrobial peptide with activity against bacteria and protozoa. Also has activity against fungi. Probably acts by disturbing membrane functions with its amphipathic structure. The chain is Dermaseptin-S2 from Phyllomedusa sauvagei (Sauvage's leaf frog).